A 154-amino-acid chain; its full sequence is Phosphopantetheine adenylyltransferase (154 aa).

Threonine 10 lines the substrate pocket. ATP is bound by residues 10–11 and histidine 18; that span reads TF. Lysine 42, leucine 74, and arginine 88 together coordinate substrate. Residues 89 to 91, glutamate 99, and 124 to 130 each bind ATP; these read GLR and NAFISSS.

It belongs to the bacterial CoaD family. In terms of assembly, homohexamer. Mg(2+) is required as a cofactor.

It localises to the cytoplasm. The enzyme catalyses (R)-4'-phosphopantetheine + ATP + H(+) = 3'-dephospho-CoA + diphosphate. Its pathway is cofactor biosynthesis; coenzyme A biosynthesis; CoA from (R)-pantothenate: step 4/5. In terms of biological role, reversibly transfers an adenylyl group from ATP to 4'-phosphopantetheine, yielding dephospho-CoA (dPCoA) and pyrophosphate. The sequence is that of Phosphopantetheine adenylyltransferase from Nautilia profundicola (strain ATCC BAA-1463 / DSM 18972 / AmH).